A 338-amino-acid chain; its full sequence is Anthocyanidin reductase ((2S)-flavan-3-ol-forming) (338 aa).

NADP(+) is bound by residues 18–21 (TGFV), Lys-48, 87–90 (VATP), and Tyr-168.

It belongs to the NAD(P)-dependent epimerase/dehydratase family. Dihydroflavonol-4-reductase subfamily.

The catalysed reaction is a (2S,3R)-flavan-3-ol + 2 NADP(+) = an anthocyanidin with a 3-hydroxy group + 2 NADPH + 2 H(+). The enzyme catalyses a (2S,3S)-flavan-3-ol + 2 NADP(+) = an anthocyanidin with a 3-hydroxy group + 2 NADPH + 2 H(+). The protein operates within secondary metabolite biosynthesis; flavonoid biosynthesis. Produces the terminal flavan-3-ol monomers required for the formation of proanthocyanidins or condensed tannins in leaves and flowers, as well as in the skin and seeds of developing berries. Behaves as a reductase and as a C-3 epimerase. Catalyzes the double reduction of anthocyanidins, producing a mixture of (2S,3S)- and (2S,3R)-flavan-3-ols. The enzyme catalyzes sequential hydride transfers to C-2 and C-4, respectively and epimerization at C-3 is achieved by tautomerization that occurs between the two hydride transfers. Converts cyanidin, pelargonidin and delphinidin into catechin and epicatechin, afzelechin and epiafzelechin, and gallocatechin and epigallocatechin respectively. This is Anthocyanidin reductase ((2S)-flavan-3-ol-forming) from Vitis vinifera (Grape).